The sequence spans 148 residues: Large ribosomal subunit protein bL9 (148 aa).

It belongs to the bacterial ribosomal protein bL9 family.

Binds to the 23S rRNA. The polypeptide is Large ribosomal subunit protein bL9 (Streptomyces avermitilis (strain ATCC 31267 / DSM 46492 / JCM 5070 / NBRC 14893 / NCIMB 12804 / NRRL 8165 / MA-4680)).